Consider the following 900-residue polypeptide: Serine-rich coiled-coil domain-containing protein 1 (900 aa).

Disordered stretches follow at residues 1–100 (MGDS…HSNM) and 156–178 (KSEGDDSGFTEDQTRRSVKQSTR). The segment covering 29 to 56 (LPSSPSSSNTVGVHSSSPSSTNSSSGST) has biased composition (low complexity). Over residues 81–100 (EPTNQNLSISNGAQPGHSNM) the composition is skewed to polar residues. Positions 673-707 (MKDECSMLKLQLKEKDELISQLQEELGKVRHLQKA) form a coiled coil.

It belongs to the CCSER family.

The polypeptide is Serine-rich coiled-coil domain-containing protein 1 (CCSER1) (Homo sapiens (Human)).